Reading from the N-terminus, the 975-residue chain is Homeobox protein cut-like 1 (975 aa).

The CUT 1 DNA-binding region spans 1-73 (SRQVKEQLIK…ILALRSIQGR (73 aa)). 2 disordered regions span residues 90 to 113 (PKRR…GSDE) and 126 to 148 (LQVQ…TSDD). Residues 113 to 169 (EAIKSILEQAKRELQVQKTAEPAQPSSTSSSGTSDDAIRSILQQARREMEAQQAALD) are a coiled coil. Phosphoserine is present on serine 207. Positions 209-246 (KKPPTAPDTSASTLPNPPALKKESQDAPGLDLPGAAES) are disordered. Glycyl lysine isopeptide (Lys-Gly) (interchain with G-Cter in SUMO2) cross-links involve residues lysine 229, lysine 255, and lysine 286. The span at 262–297 (GVWKDHWWSTVQPERKSAAPPEDAKSEEAGGTKEKG) shows a compositional bias: basic and acidic residues. The disordered stretch occupies residues 262-369 (GVWKDHWWST…SKPAKPSVPP (108 aa)). Positions 328-351 (RTPQSSELSLTGASRSETPQNSPL) are enriched in polar residues. Serine 349 is modified (phosphoserine). The CUT 2 DNA-binding region spans 374-461 (QYEIYMYQEV…QGVLPVQGQQ (88 aa)). The segment covering 476-489 (LQQGCVSSESTPKT) has biased composition (polar residues). Residues 476 to 549 (LQQGCVSSES…SQPATPLPLS (74 aa)) form a disordered region. Positions 490 to 506 (SASCSPAPESPMSSSES) are enriched in low complexity. Phosphoserine occurs at positions 499 and 509. The CUT 3 DNA-binding region spans 557-644 (QELVAMSPEL…VEKLMDMKRM (88 aa)). Positions 652-687 (RRHSSVSDSQPCEPPSVGIDYSQGASPQPQHQLKKP) are disordered. Residues 684–743 (LKKPRVVLAPEEKEALKRAYQQKPYPSPKTIEELATQLNLKTSTVINWFHNYRSRIRREL) constitute a DNA-binding region (homeobox). Phosphoserine is present on serine 710. A Glycyl lysine isopeptide (Lys-Gly) (interchain with G-Cter in SUMO2) cross-link involves residue lysine 724. A disordered region spans residues 752–949 (SQGQAGARHS…DSRDNPLRKK (198 aa)). Positions 756 to 773 (AGARHSPSARSSGAAPSS) are enriched in low complexity. Phosphoserine is present on serine 777. Positions 780-813 (GVEAAEGPGAADAEESAPAAAAKSQGGPAEAAVA) are enriched in low complexity. The segment covering 838-847 (PGRRGGGGPA) has biased composition (gly residues). Residues 850–860 (APAAPAAAARG) are compositionally biased toward low complexity. Residues 861 to 890 (PSRRPGARAKPRRRRRRRRRHARGGGRRYL) show a composition bias toward basic residues. Residues 907–929 (RSSALPSTSAPAAARRPSSLQSL) are compositionally biased toward low complexity. Position 925 is a phosphoserine (serine 925). Over residues 937 to 946 (GARDSRDNPL) the composition is skewed to basic and acidic residues. Residues serine 956 and serine 966 each carry the phosphoserine modification.

Belongs to the CUT homeobox family. Interacts with BANP. Post-translationally, as cells progress into S phase, a fraction of CUX1 molecules is proteolytically processed into N-terminally truncated proteins of 110 kDa by CTSL. Cell cycle-dependent processing of CUX1 serves to generate a CDP/Cux p110 with distinct DNA binding and transcriptional properties. Phosphorylated by PKA. As to expression, a broad pattern of expression observed in tissues of diverse origins, such as cartilage, liver, brain, lung, heart and skeletal muscle. There are 2 distinct protein species: the larger one (230-250 kDa) is found mainly in adult brain, lung and heart, and the smaller one (180-190 kDa) predominates in early embryonic tissues.

It localises to the nucleus. Functionally, transcription factor involved in the control of neuronal differentiation in the brain. Regulates dendrite development and branching, and dendritic spine formation in cortical layers II-III. Also involved in the control of synaptogenesis. In addition, it has probably a broad role in mammalian development as a repressor of developmentally regulated gene expression. May act by preventing binding of positively-activing CCAAT factors to promoters. Component of nf-munr repressor; binds to the matrix attachment regions (MARs) (5' and 3') of the immunoglobulin heavy chain enhancer. Represses T-cell receptor (TCR) beta enhancer function by binding to MARbeta, an ATC-rich DNA sequence located upstream of the TCR beta enhancer. Binds to the TH enhancer; may require the basic helix-loop-helix protein TCF4 as a coactivator. Its function is as follows. Plays a role in cell cycle progression, in particular at the G1/S transition. As cells progress into S phase, a fraction of CUX1 molecules is proteolytically processed into N-terminally truncated proteins of 110 kDa. While CUX1 only transiently binds to DNA and carries the CCAAT-displacement activity, CDP/Cux p110 makes a stable interaction with DNA and stimulates expression of genes such as POLA1. The polypeptide is Homeobox protein cut-like 1 (CUX1) (Canis lupus familiaris (Dog)).